The following is an 84-amino-acid chain: CDC42 small effector protein 2-A (84 aa).

Residues Cys-10 and Cys-11 are each lipidated (S-palmitoyl cysteine). The region spanning 29 to 42 (IGEPTNFVHTAHVG) is the CRIB domain.

It belongs to the CDC42SE/SPEC family.

It localises to the cytoplasm. It is found in the cytoskeleton. Its subcellular location is the cell membrane. Probably involved in the organization of the actin cytoskeleton by acting downstream of CDC42, inducing actin filament assembly. The protein is CDC42 small effector protein 2-A (cdc42se2-a) of Xenopus laevis (African clawed frog).